The sequence spans 550 residues: Leucine-rich repeat, immunoglobulin-like domain and transmembrane domain-containing protein 2 (550 aa).

The signal sequence occupies residues 1–19 (MASVFHYFLLVLVFLDTHA). In terms of domain architecture, LRRNT spans 23–54 (FCLPGCTCSEESFGRTLQCTSVSLGKIPGNLS). Asn52 is a glycosylation site (N-linked (GlcNAc...) asparagine). 4 LRR repeats span residues 80-103 (TLEY…EHLP), 104-125 (ELRE…AFRA), 128-149 (LLRV…ALQF), and 152-173 (SLTY…VFLN). In terms of domain architecture, LRRCT spans 200–252 (NPWVCDCRLRGLVQFVKSITLPVILVNSYLICQGPLSKAGQLFHETELSACMK). The Ig-like domain maps to 253-341 (PQISTPSANI…SIGKSNLVIS (89 aa)). Cysteines 274 and 327 form a disulfide. A Fibronectin type-III domain is found at 361-451 (EGNAYIDLRV…QGQCVAFVTG (91 aa)). The chain crosses the membrane as a helical span at residues 466 to 486 (VTVVLCVVLLAVPVGAYAWAA). Residues 508-550 (SCTPAAPQSKDGSFREHPAVCDDGEGHIDTEGDKEKGGTEDNS) form a disordered region. Residues 519 to 550 (GSFREHPAVCDDGEGHIDTEGDKEKGGTEDNS) show a composition bias toward basic and acidic residues.

Interacts with LRIT1; may form a heterodimer with LRIT1.

Its subcellular location is the membrane. This is Leucine-rich repeat, immunoglobulin-like domain and transmembrane domain-containing protein 2 (LRIT2) from Homo sapiens (Human).